We begin with the raw amino-acid sequence, 344 residues long: Serine/threonine-protein kinase ppk13 (344 aa).

ATP is bound by residues leucine 38–valine 46 and lysine 61. The 269-residue stretch at methionine 76 to glutamine 344 folds into the Protein kinase domain. Catalysis depends on histidine 192, which acts as the Proton acceptor.

The protein belongs to the protein kinase superfamily. Ser/Thr protein kinase family.

It localises to the endoplasmic reticulum. The protein resides in the golgi apparatus. The catalysed reaction is L-seryl-[protein] + ATP = O-phospho-L-seryl-[protein] + ADP + H(+). It catalyses the reaction L-threonyl-[protein] + ATP = O-phospho-L-threonyl-[protein] + ADP + H(+). This is Serine/threonine-protein kinase ppk13 (ppk13) from Schizosaccharomyces pombe (strain 972 / ATCC 24843) (Fission yeast).